The primary structure comprises 236 residues: DNA repair protein RecO (236 aa).

It belongs to the RecO family.

Its function is as follows. Involved in DNA repair and RecF pathway recombination. In Haemophilus influenzae (strain 86-028NP), this protein is DNA repair protein RecO.